The sequence spans 102 residues: Large ribosomal subunit protein bL21 (102 aa).

It belongs to the bacterial ribosomal protein bL21 family. As to quaternary structure, part of the 50S ribosomal subunit. Contacts protein L20.

This protein binds to 23S rRNA in the presence of protein L20. This chain is Large ribosomal subunit protein bL21, found in Marinomonas sp. (strain MWYL1).